Reading from the N-terminus, the 85-residue chain is uncharacterized protein (85 aa).

Transmembrane regions (helical) follow at residues 20–42 (IYWF…TTFL) and 52–69 (IILR…KHYY).

The protein localises to the membrane. This is an uncharacterized protein from Saccharomyces cerevisiae (strain ATCC 204508 / S288c) (Baker's yeast).